The chain runs to 426 residues: Inhibin beta A chain (426 aa).

Positions 1-20 (MPLLWLRGFLLASCWIIVRS) are cleaved as a signal peptide. A propeptide spanning residues 21–310 (SPTPGSEGHS…EDHPHRRRRR (290 aa)) is cleaved from the precursor. N-linked (GlcNAc...) asparagine glycosylation occurs at Asn165. Residues 259-288 (KKKKKEEEGEGKKKGGGEGGAGADEEKEQS) form a disordered region. The segment covering 263–274 (KEEEGEGKKKGG) has biased composition (basic and acidic residues). Cystine bridges form between Cys314-Cys322, Cys321-Cys391, Cys350-Cys423, and Cys354-Cys425.

The protein belongs to the TGF-beta family. As to quaternary structure, dimeric, linked by one or more disulfide bonds. Inhibin A is a dimer of alpha/INHA and beta-A/INHBA. Activin A is a homodimer of beta-A/INHBA. Activin AB is a dimer of beta-A/INHBA and beta-B/INHBB. Interacts with FST and FSTL3; these interactions prevent activin A interaction to its type II receptor. Activin A interacts with ACVR2A. Activin A interacts with BMPR2. Inhibin A interacts with ACVR1; this interaction creates a non-signaling complex (NSC) that inhibits ACVR1-mediated BMP signaling. Inhibin A interacts with ACVR2A.

It is found in the secreted. In terms of biological role, inhibins/activins are involved in regulating a number of diverse functions such as hypothalamic and pituitary hormone secretion, gonadal hormone secretion, germ cell development and maturation, erythroid differentiation, insulin secretion, nerve cell survival, embryonic axial development or bone growth, depending on their subunit composition. Functionally, activin A is a homodimer of INHBA that plays a role in several essential biological processes including embryonic development, stem cell maintenance and differentiation, haematopoiesis, cell proliferation and tissue fibrosis. Signals through type I (such as ACVR1B or ACVR1C) and type II receptors (such as ACVR2A, ACVR2B or BMPR2) which, upon ligand binding, phosphorylate SMAD2 and SMAD3 intracellular signaling mediators that form a complex with SMAD4, translocate to the nucleus and modulate gene expression. Can also activate alternative non-canonical intracellular signaling pathways including the p38 MAPK, extracellular signal-regulated kinases 1/2 (ERK1/2) and c-Jun N-terminal kinases (JNKs) to modulate cell migration and differentiation. Alternatively, promotes osteoblastic differentiation via ACVRL1-SMAD1/5/9 pathway. In addition, can engage the type I receptor ACVR1 to form an ACVR1-activin A-type II receptor non-signaling complex (NSC) that renders receptors unavailable for engagement with BMPs, hence resulting in an apparent inhibition of ACVR1-mediated BMP signaling. Its function is as follows. Inhibin A is a dimer of alpha/INHA and beta-A/INHBA that functions as a feedback regulator in the hypothalamic-pituitary-gonadal (HPG) axis. Inhibits the secretion of FSH from the anterior pituitary gland by acting on pituitary gonadotrope cells. Antagonizes activin A by binding to the proteoglycan, betaglycan, and forming a stable complex with and, thereby, sequestering type II activin receptors while excluding type I receptor. The sequence is that of Inhibin beta A chain (INHBA) from Homo sapiens (Human).